The primary structure comprises 1766 residues: DNA-directed RNA polymerase II subunit RPB1-B (1766 aa).

The Zn(2+) site is built by Cys-69, Cys-72, Cys-79, and His-82. 3 residues coordinate Mg(2+): Asp-487, Asp-489, and Asp-491. A bridging helix region spans residues 813–825; the sequence is PHEFFFHTMAGRE. The segment at 1660–1766 is disordered; sequence HAMSSAAPPS…EFGDEEEEEQ (107 aa). Basic and acidic residues predominate over residues 1706–1716; sequence RGDEPSTHRSD. A compositionally biased stretch (low complexity) spans 1742–1756; sequence PTAKTPQQAAPPTAA.

This sequence belongs to the RNA polymerase beta' chain family. In terms of assembly, component of the RNA polymerase II (Pol II) complex consisting of 12 subunits.

It is found in the nucleus. It catalyses the reaction RNA(n) + a ribonucleoside 5'-triphosphate = RNA(n+1) + diphosphate. In terms of biological role, DNA-dependent RNA polymerase catalyzes the transcription of DNA into RNA using the four ribonucleoside triphosphates as substrates. Largest and catalytic component of RNA polymerase II which synthesizes mRNA precursors and many functional non-coding RNAs. Forms the polymerase active center together with the second largest subunit. Pol II is the central component of the basal RNA polymerase II transcription machinery. It is composed of mobile elements that move relative to each other. RPB1 is part of the core element with the central large cleft, the clamp element that moves to open and close the cleft and the jaws that are thought to grab the incoming DNA template. At the start of transcription, a single-stranded DNA template strand of the promoter is positioned within the central active site cleft of Pol II. A bridging helix emanates from RPB1 and crosses the cleft near the catalytic site and is thought to promote translocation of Pol II by acting as a ratchet that moves the RNA-DNA hybrid through the active site by switching from straight to bent conformations at each step of nucleotide addition. During transcription elongation, Pol II moves on the template as the transcript elongates. The polypeptide is DNA-directed RNA polymerase II subunit RPB1-B (TRP5.9) (Trypanosoma brucei brucei).